Consider the following 361-residue polypeptide: Mitochondrial import receptor subunit TOM40 homolog (361 aa).

The span at 1 to 10 shows a compositional bias: low complexity; it reads MGNVLAASSP. The disordered stretch occupies residues 1 to 71; that stretch reads MGNVLAASSP…AASAGGTADD (71 aa). Positions 11-36 are enriched in pro residues; that stretch reads PAGPPPPPAPPLVGLPPPPPSPPGFT. The segment covering 40 to 52 has biased composition (gly residues); it reads LGGGLGAGAGTGR. Low complexity predominate over residues 59–71; it reads GTAAASAGGTADD.

This sequence belongs to the Tom40 family. As to quaternary structure, forms part of the preprotein translocase complex of the outer mitochondrial membrane (TOM complex) which consists of at least 7 different proteins (TOMM5, TOMM6, TOMM7, TOMM20, TOMM22, TOMM40 and TOMM70). Interacts with mitochondrial targeting sequences. Interacts with TIMM29; linking the TIM22 complex to the TOM complex. Forms a complex with BCAP31 (via C-terminus) which mediates the translocation of components of the mitochondrial membrane respiratory chain NADH dehydrogenase (Complex I) from the cytosol to the mitochondria. Interacts (via N-terminus) with CYP1A1 (via mitochondrial targeting signal); this interaction is required for CYP1A1 translocation across the mitochondrial outer membrane.

Its subcellular location is the mitochondrion outer membrane. Channel-forming protein essential for import of protein precursors into mitochondria. Plays a role in the assembly of the mitochondrial membrane respiratory chain NADH dehydrogenase (Complex I) by forming a complex with BCAP31 and mediating the translocation of Complex I components from the cytosol to the mitochondria. The sequence is that of Mitochondrial import receptor subunit TOM40 homolog from Bos taurus (Bovine).